Consider the following 1080-residue polypeptide: Protein transport protein SEC24 C (1080 aa).

Residues 1 to 10 (MVAPVPPGAP) are compositionally biased toward pro residues. 3 disordered regions span residues 1–189 (MVAP…SGMI), 201–220 (GSGGFPRGTQFPGAAVTTPQ), and 316–367 (TAMG…SDYV). Positions 12-43 (PNSQQNSGPPNFYPGSQGNSNALADNMQNLSL) are enriched in polar residues. A compositionally biased stretch (pro residues) spans 45–70 (RPPPMMPGSGPRPPPPFGQSPQPFPQ). Low complexity-rich tracts occupy residues 71-84 (QSPSYGAPQRGPSP), 142-160 (PAASSSGFPAFGPSGSVAA), and 178-189 (GSGMSMPPSGMI). A compositionally biased stretch (polar residues) spans 340–356 (GSSSSPTVFETRQSNQA). C430, C433, C452, and C455 together coordinate Zn(2+). Residues 430-455 (CSRCKGYINPFMKFIDQGRKFICNFC) are zinc finger-like.

Belongs to the SEC23/SEC24 family. SEC24 subfamily. In terms of assembly, component of the coat protein complex II (COPII), composed of at least five proteins: the Sec23/24 complex, the Sec13/31 complex and Sar1. In terms of tissue distribution, mainly expressed at low levels in pollen, leaves, roots and stems.

The protein localises to the cytoplasmic vesicle. The protein resides in the COPII-coated vesicle membrane. Its subcellular location is the endoplasmic reticulum membrane. It is found in the golgi apparatus membrane. Component of the coat protein complex II (COPII), that covers ER-derived vesicles involved in transport from the endoplasmic reticulum to the Golgi apparatus. COPII is composed of at least five proteins: the SEC23/24 complex, the SEC13/31 complex, and the protein SAR1. Acts in the cytoplasm to promote the transport of secretory, plasma membrane, and vacuolar proteins from the endoplasmic reticulum to the Golgi complex. The sequence is that of Protein transport protein SEC24 C from Arabidopsis thaliana (Mouse-ear cress).